A 329-amino-acid chain; its full sequence is DNA-directed RNA polymerase subunit alpha (329 aa).

The alpha N-terminal domain (alpha-NTD) stretch occupies residues 1-235 (MQNSIIGFLK…EQLEAFVDLR (235 aa)). The segment at 249–329 (FEPILLRPVD…KWPPSSILEE (81 aa)) is alpha C-terminal domain (alpha-CTD).

Belongs to the RNA polymerase alpha chain family. Homodimer. The RNAP catalytic core consists of 2 alpha, 1 beta, 1 beta' and 1 omega subunit. When a sigma factor is associated with the core the holoenzyme is formed, which can initiate transcription.

It carries out the reaction RNA(n) + a ribonucleoside 5'-triphosphate = RNA(n+1) + diphosphate. Functionally, DNA-dependent RNA polymerase catalyzes the transcription of DNA into RNA using the four ribonucleoside triphosphates as substrates. The polypeptide is DNA-directed RNA polymerase subunit alpha (Buchnera aphidicola subsp. Schizaphis graminum (strain Sg)).